A 206-amino-acid chain; its full sequence is Large ribosomal subunit protein mL62 (206 aa).

A mitochondrion-targeting transit peptide spans 1–29; it reads MAAARCLRWGLSRAEAWLLPPPTSCCHRA. At glutamine 90 the chain carries N5-methylglutamine.

The protein belongs to the prokaryotic/mitochondrial release factor family. Mitochondrion-specific ribosomal protein mL62 subfamily. In terms of assembly, component of the mitochondrial ribosome large subunit (39S) which comprises a 16S rRNA and about 50 distinct proteins. Methylation of glutamine in the GGQ triplet by HEMK1.

It is found in the mitochondrion. It carries out the reaction an N-acyl-L-alpha-aminoacyl-tRNA + H2O = an N-acyl-L-amino acid + a tRNA + H(+). Essential peptidyl-tRNA hydrolase component of the mitochondrial large ribosomal subunit. Acts as a codon-independent translation release factor that has lost all stop codon specificity and directs the termination of translation in mitochondrion, possibly in case of abortive elongation. May be involved in the hydrolysis of peptidyl-tRNAs that have been prematurely terminated and thus in the recycling of stalled mitochondrial ribosomes. The protein is Large ribosomal subunit protein mL62 of Bos taurus (Bovine).